Here is a 486-residue protein sequence, read N- to C-terminus: UDP-N-acetylmuramoyl-L-alanyl-D-glutamate--2,6-diaminopimelate ligase (486 aa).

Ser-33 contacts UDP-N-acetyl-alpha-D-muramoyl-L-alanyl-D-glutamate. 110 to 116 lines the ATP pocket; sequence GTNGKTS. Residues 152-153, Ser-179, Gln-185, and Arg-187 each bind UDP-N-acetyl-alpha-D-muramoyl-L-alanyl-D-glutamate; that span reads TT. Lys-219 is modified (N6-carboxylysine). Meso-2,6-diaminopimelate is bound by residues Arg-383, 407-410, Gly-455, and Glu-459; that span reads DNPR. The Meso-diaminopimelate recognition motif motif lies at 407–410; it reads DNPR.

It belongs to the MurCDEF family. MurE subfamily. Requires Mg(2+) as cofactor. Post-translationally, carboxylation is probably crucial for Mg(2+) binding and, consequently, for the gamma-phosphate positioning of ATP.

Its subcellular location is the cytoplasm. It catalyses the reaction UDP-N-acetyl-alpha-D-muramoyl-L-alanyl-D-glutamate + meso-2,6-diaminopimelate + ATP = UDP-N-acetyl-alpha-D-muramoyl-L-alanyl-gamma-D-glutamyl-meso-2,6-diaminopimelate + ADP + phosphate + H(+). Its pathway is cell wall biogenesis; peptidoglycan biosynthesis. In terms of biological role, catalyzes the addition of meso-diaminopimelic acid to the nucleotide precursor UDP-N-acetylmuramoyl-L-alanyl-D-glutamate (UMAG) in the biosynthesis of bacterial cell-wall peptidoglycan. The sequence is that of UDP-N-acetylmuramoyl-L-alanyl-D-glutamate--2,6-diaminopimelate ligase from Zymomonas mobilis subsp. mobilis (strain ATCC 31821 / ZM4 / CP4).